A 516-amino-acid chain; its full sequence is MTTPYKHEPFTNFGIEENRKAFEKALETVNNEWLGQSYPLVIDGERYETENKIVSINPANKEEVVGTVSKATQDHAEKAIQAAAKAFETWRYTDPEERAAVLFRAVAKVRRKKHEFSALLVKEAGKPWNEADADTAEAIDFMEYYARQMIELAKGKPVNSREGERNQYVYTPTGVTVVIPPWNFLFAIMAGTTVAPIVTGNTVVLKPASAAPVIAAKFVEVLEESGLPKGVVNFVPGSGAEVGDYLVDHPKTSIITFTGSREVGTRIFERAAKVQPGQTHLKQVIAEMGGKDTVVVDEDCDIELAAQSIFTSAFGFAGQKCSAGSRAVVHEKVYDEVLKRVIEITESKKVGEPDSADVYMGPVIDQASFNKIMDYIEIGKEEGRLVSGGKGDDSKGYFIEPTIFADLDPKARLMQEEIFGPVVAFSKVSSFDEALEVANNTEYGLTGAVITKNRDHINRAKQEFHVGNLYFNRNCTGAIVGYHPFGGFKMSGTDSKAGGPDYLALHMQAKTISEMF.

Catalysis depends on residues E287 and C321.

It belongs to the aldehyde dehydrogenase family. RocA subfamily.

The enzyme catalyses L-glutamate 5-semialdehyde + NAD(+) + H2O = L-glutamate + NADH + 2 H(+). Its pathway is amino-acid degradation; L-proline degradation into L-glutamate; L-glutamate from L-proline: step 2/2. In Bacillus licheniformis (strain ATCC 14580 / DSM 13 / JCM 2505 / CCUG 7422 / NBRC 12200 / NCIMB 9375 / NCTC 10341 / NRRL NRS-1264 / Gibson 46), this protein is 1-pyrroline-5-carboxylate dehydrogenase.